The sequence spans 859 residues: Bifunctional levopimaradiene synthase, chloroplastic (859 aa).

A chloroplast-targeting transit peptide spans Met1 to Ser70. Lys259 is a binding site for substrate. Mg(2+) is bound by residues Asp392 and Asp394. The DXDD motif signature appears at Asp392–Asp395. Lys479 contacts substrate. Positions 611, 615, 755, 759, and 763 each coordinate Mg(2+). The short motif at Asp611–Asp615 is the DDXXD motif element.

Belongs to the terpene synthase family. Tpsd subfamily. The cofactor is Mg(2+).

The protein localises to the plastid. The protein resides in the chloroplast. It catalyses the reaction (2E,6E,10E)-geranylgeranyl diphosphate = (+)-copalyl diphosphate. The catalysed reaction is (+)-copalyl diphosphate = abieta-8(14),12-diene + diphosphate. It participates in terpene metabolism; oleoresin biosynthesis. Its function is as follows. Involved in defensive oleoresin formation in conifers in response to insect attack or other injury. Involved in diterpene (C20) olefins biosynthesis. Bifunctional enzyme that catalyzes two sequential cyclizations of geranylgeranyl diphosphate (GGPP) to levopimaradiene. Levopimaradiene is the major products of the enzyme followed by abietadiene, neoabietadiene and palustradiene. In Picea abies (Norway spruce), this protein is Bifunctional levopimaradiene synthase, chloroplastic (TPS-LAS).